A 477-amino-acid polypeptide reads, in one-letter code: uncharacterized protein (477 aa).

This is an uncharacterized protein from Aquifex aeolicus (strain VF5).